Reading from the N-terminus, the 151-residue chain is UPF0178 protein ESA_02916 (151 aa).

The protein belongs to the UPF0178 family.

The chain is UPF0178 protein ESA_02916 from Cronobacter sakazakii (strain ATCC BAA-894) (Enterobacter sakazakii).